We begin with the raw amino-acid sequence, 338 residues long: MGKKQNRKTGNSKTQSASPPPKERSSSPATEQSWMENDFDELREEGFRRSNYSELREDIQTKGKEVENFEKNLEECITRITNTEKCLKELMELKTKARELREECRSLRSRCDQLEERVSAMEDEMNEMKREGKFREKRIKRNEQSLQEIWDYVKRPNLRLIGVPESDVENGTKLENTLQDIIQENFPNLARQANVQIQEIQRTPQRYSSRRATPRHIIVRFTKVEMKEKMLRAAREKGRVTLKGKPIRLTADLSAETLQARREWGPIFNILKEKNFQPRISYPAKLSFISEGEIKYFIDKQMLRDFVTTRPALKELLKEALNMERNNRYQPLQNHAKM.

Residues 1–40 (MGKKQNRKTGNSKTQSASPPPKERSSSPATEQSWMENDFD) are disordered. Polar residues-rich tracts occupy residues 8 to 17 (KTGNSKTQSA) and 26 to 35 (SSPATEQSWM). Residues 49-153 (RSNYSELRED…QSLQEIWDYV (105 aa)) are a coiled coil. Residues 157–252 (NLRLIGVPES…KGKPIRLTAD (96 aa)) are RNA recognition motif (RRM) domain. The segment at 253–317 (LSAETLQARR…TTRPALKELL (65 aa)) is C-terminal domain (CTD).

It belongs to the transposase 22 family. In terms of assembly, homotrimer (via coiled coil domain). May also form larger homooligomers. May interact with DDX39A, HNRNPA1, SERBP1 and YBX1. Interacts with TEX19 and UBR2. Interacts with MOV10. Interacts with APOBEC3D; this interaction inhibits LINE-1 retrotransposition. Post-translationally, polyubiquitinated, probably by UBR2, which induces its degradation.

Its subcellular location is the nucleus. The protein resides in the nucleolus. It is found in the cytoplasm. The protein localises to the cytoplasmic ribonucleoprotein granule. It localises to the stress granule. In terms of biological role, nucleic acid-binding protein which is essential for retrotransposition of LINE-1 elements in the genome. Functions as a nucleic acid chaperone binding its own transcript and therefore preferentially mobilizing the transcript from which they are encoded. This Homo sapiens (Human) protein is LINE-1 retrotransposable element ORF1 protein (L1RE1).